The following is a 428-amino-acid chain: Adenylosuccinate synthetase (428 aa).

GTP contacts are provided by residues 11-17 (GDEGKGK) and 39-41 (GHT). The Proton acceptor role is filled by aspartate 12. Mg(2+) is bound by residues aspartate 12 and glycine 39. IMP-binding positions include 12-15 (DEGK), 37-40 (NAGH), threonine 130, arginine 144, asparagine 226, threonine 241, and arginine 305. Histidine 40 acts as the Proton donor in catalysis. 301 to 307 (VTTGRKR) lines the substrate pocket. GTP contacts are provided by residues arginine 307, 333–335 (KLD), and 415–417 (GTG).

This sequence belongs to the adenylosuccinate synthetase family. Homodimer. The cofactor is Mg(2+).

Its subcellular location is the cytoplasm. It carries out the reaction IMP + L-aspartate + GTP = N(6)-(1,2-dicarboxyethyl)-AMP + GDP + phosphate + 2 H(+). Its pathway is purine metabolism; AMP biosynthesis via de novo pathway; AMP from IMP: step 1/2. Plays an important role in the de novo pathway and in the salvage pathway of purine nucleotide biosynthesis. Catalyzes the first committed step in the biosynthesis of AMP from IMP. This is Adenylosuccinate synthetase from Lodderomyces elongisporus (strain ATCC 11503 / CBS 2605 / JCM 1781 / NBRC 1676 / NRRL YB-4239) (Yeast).